Here is a 328-residue protein sequence, read N- to C-terminus: Cell division protein ZipA (328 aa).

Residues 1 to 4 (MDLN) are Periplasmic-facing. The chain crosses the membrane as a helical span at residues 5–25 (TILIIVGIVALVALIVHGLWS). At 26–328 (NRREKSKYFD…NAEQAYLARV (303 aa)) the chain is on the cytoplasmic side. Residues 43–82 (TSLTSRSHTQEEMAQPNNISPNTYVENGHTPIPQPTTEKV) are disordered. Residues 57–67 (QPNNISPNTYV) show a composition bias toward polar residues.

It belongs to the ZipA family. As to quaternary structure, interacts with FtsZ via their C-terminal domains.

The protein localises to the cell inner membrane. Essential cell division protein that stabilizes the FtsZ protofilaments by cross-linking them and that serves as a cytoplasmic membrane anchor for the Z ring. Also required for the recruitment to the septal ring of downstream cell division proteins. In Haemophilus influenzae (strain PittEE), this protein is Cell division protein ZipA.